A 37-amino-acid polypeptide reads, in one-letter code: Large ribosomal subunit protein bL36 (37 aa).

Belongs to the bacterial ribosomal protein bL36 family.

The protein is Large ribosomal subunit protein bL36 of Acetivibrio thermocellus (strain ATCC 27405 / DSM 1237 / JCM 9322 / NBRC 103400 / NCIMB 10682 / NRRL B-4536 / VPI 7372) (Clostridium thermocellum).